The chain runs to 61 residues: MAKKSMIAKNKRPAKHSTQAYTRCERCGRPHSVYRKFHLCRICFRELAYKGQIPGVKKASW.

4 residues coordinate Zn(2+): C24, C27, C40, and C43.

Belongs to the universal ribosomal protein uS14 family. Zinc-binding uS14 subfamily. Part of the 30S ribosomal subunit. Contacts proteins S3 and S10. The cofactor is Zn(2+).

Binds 16S rRNA, required for the assembly of 30S particles and may also be responsible for determining the conformation of the 16S rRNA at the A site. The protein is Small ribosomal subunit protein uS14C of Enterococcus faecalis (strain ATCC 700802 / V583).